A 546-amino-acid polypeptide reads, in one-letter code: 2-isopropylmalate synthase (546 aa).

In terms of domain architecture, Pyruvate carboxyltransferase spans 8 to 271; the sequence is ILIFDTTLRD…NSFFKRNPDS (264 aa). D17, H208, H210, and N244 together coordinate Mn(2+). The interval 408 to 546 is regulatory domain; the sequence is QLSLVQVSCG…TNTFLSNNAN (139 aa).

Belongs to the alpha-IPM synthase/homocitrate synthase family. LeuA type 1 subfamily. As to quaternary structure, homodimer. Requires Mn(2+) as cofactor.

Its subcellular location is the cytoplasm. It carries out the reaction 3-methyl-2-oxobutanoate + acetyl-CoA + H2O = (2S)-2-isopropylmalate + CoA + H(+). The protein operates within amino-acid biosynthesis; L-leucine biosynthesis; L-leucine from 3-methyl-2-oxobutanoate: step 1/4. In terms of biological role, catalyzes the condensation of the acetyl group of acetyl-CoA with 3-methyl-2-oxobutanoate (2-ketoisovalerate) to form 3-carboxy-3-hydroxy-4-methylpentanoate (2-isopropylmalate). This chain is 2-isopropylmalate synthase, found in Prochlorococcus marinus (strain AS9601).